The sequence spans 507 residues: ATP synthase subunit alpha, chloroplastic (507 aa).

170–177 is an ATP binding site; it reads GDRQTGKT.

This sequence belongs to the ATPase alpha/beta chains family. F-type ATPases have 2 components, CF(1) - the catalytic core - and CF(0) - the membrane proton channel. CF(1) has five subunits: alpha(3), beta(3), gamma(1), delta(1), epsilon(1). CF(0) has four main subunits: a, b, b' and c.

Its subcellular location is the plastid. The protein resides in the chloroplast thylakoid membrane. It catalyses the reaction ATP + H2O + 4 H(+)(in) = ADP + phosphate + 5 H(+)(out). Functionally, produces ATP from ADP in the presence of a proton gradient across the membrane. The alpha chain is a regulatory subunit. The sequence is that of ATP synthase subunit alpha, chloroplastic from Cucumis sativus (Cucumber).